The chain runs to 149 residues: SsrA-binding protein (149 aa).

Belongs to the SmpB family.

It is found in the cytoplasm. Its function is as follows. Required for rescue of stalled ribosomes mediated by trans-translation. Binds to transfer-messenger RNA (tmRNA), required for stable association of tmRNA with ribosomes. tmRNA and SmpB together mimic tRNA shape, replacing the anticodon stem-loop with SmpB. tmRNA is encoded by the ssrA gene; the 2 termini fold to resemble tRNA(Ala) and it encodes a 'tag peptide', a short internal open reading frame. During trans-translation Ala-aminoacylated tmRNA acts like a tRNA, entering the A-site of stalled ribosomes, displacing the stalled mRNA. The ribosome then switches to translate the ORF on the tmRNA; the nascent peptide is terminated with the 'tag peptide' encoded by the tmRNA and targeted for degradation. The ribosome is freed to recommence translation, which seems to be the essential function of trans-translation. The sequence is that of SsrA-binding protein from Anaplasma marginale (strain Florida).